A 634-amino-acid polypeptide reads, in one-letter code: Coilin (634 aa).

Disordered stretches follow at residues 87–135 (VSPA…IAEN), 149–276 (PGPS…KLSQ), and 342–361 (GAKS…DSTL). A compositionally biased stretch (polar residues) spans 152–181 (SVQSKLLTNKGTPKAPETQTEVSNMSANIE). Basic and acidic residues-rich tracts occupy residues 223-234 (TLKEGKMSESKN) and 251-272 (KENE…KIPD).

The protein belongs to the coilin family. In egg chambers expressed in the follicle cells, nurse cells and oocyte. Expressed in the larval brain, salivary glands, fat bodies and in the somatic hub cells at the tip of the testis. Expressed in the spermatogonia and spermatocytes, and in the adult ejaculatory duct (at protein level). Expressed in the adult Malpighian tubules.

The protein resides in the nucleus. Its subcellular location is the nucleoplasm. The protein localises to the cajal body. It localises to the chromosome. It is found in the centromere. The protein resides in the cytoplasm. Its subcellular location is the cytoskeleton. The protein localises to the spindle. Its function is as follows. Component of nuclear coiled bodies, also known as Cajal bodies or CBs, which are involved in the modification and assembly of nucleoplasmic snRNPs. Required for Cajal body formation. The protein is Coilin of Drosophila melanogaster (Fruit fly).